A 335-amino-acid chain; its full sequence is Dolichyl-diphosphooligosaccharide--protein glycosyltransferase subunit MAGT1 (335 aa).

The first 29 residues, 1 to 29 (MAARWRFWCVSVTMVVALLIVCDVPSASA), serve as a signal peptide directing secretion. Residues 30 to 184 (QRKKEMVLSE…DVNIRVIRPP (155 aa)) lie on the Extracellular side of the membrane. The 129-residue stretch at 47-175 (WTNKRPVIRM…IARWIADRTD (129 aa)) folds into the Thioredoxin domain. Asparagine 71 carries an N-linked (GlcNAc...) asparagine glycan. A disulfide bridge connects residues cysteine 87 and cysteine 90. A helical transmembrane segment spans residues 185-205 (NYAGPLMLGLLLAVIGGLVYL). The Cytoplasmic segment spans residues 206-209 (RRSN). Residues 210–230 (MEFLFNKTGWAFAALCFVLAM) form a helical membrane-spanning segment. Over 231 to 270 (TSGQMWNHIRGPPYAHKNPHTGHVNYIHGSSQAQFVAETH) the chain is Extracellular. A helical transmembrane segment spans residues 271–291 (IVLLFNGGVTLGMVLLCEAAT). Residues 292–300 (SDMDIGKRK) are Cytoplasmic-facing. The helical transmembrane segment at 301–321 (IMCVAGIGLVVLFFSWMLSIF) threads the bilayer. Topologically, residues 322-335 (RSKYHGYPYSFLMS) are extracellular.

Belongs to the OST3/OST6 family. In terms of assembly, accessory component of the STT3B-containing form of the oligosaccharyltransferase (OST) complex. OST exists in two different complex forms which contain common core subunits RPN1, RPN2, OST48, OST4, DAD1 and TMEM258, either STT3A or STT3B as catalytic subunits, and form-specific accessory subunits. OST can form stable complexes with the Sec61 complex or with both the Sec61 and TRAP complexes. The association of TUSC3 or MAGT1 with the STT3B-containing complex seems to be mutually exclusvice. Ubiquitous. Expressed at very low levels in brain, lung and kidney.

Its subcellular location is the cell membrane. The protein localises to the endoplasmic reticulum. It localises to the endoplasmic reticulum membrane. It functions in the pathway protein modification; protein glycosylation. Accessory component of the STT3B-containing form of the N-oligosaccharyl transferase (OST) complex which catalyzes the transfer of a high mannose oligosaccharide from a lipid-linked oligosaccharide donor to an asparagine residue within an Asn-X-Ser/Thr consensus motif in nascent polypeptide chains. Involved in N-glycosylation of STT3B-dependent substrates. Specifically required for the glycosylation of a subset of acceptor sites that are near cysteine residues; in this function seems to act redundantly with TUSC3. In its oxidized form proposed to form transient mixed disulfides with a glycoprotein substrate to facilitate access of STT3B to the unmodified acceptor site. Also has oxidoreductase-independent functions in the STT3B-containing OST complex possibly involving substrate recognition. Could indirectly play a role in Mg(2+) transport in epithelial cells. In Homo sapiens (Human), this protein is Dolichyl-diphosphooligosaccharide--protein glycosyltransferase subunit MAGT1.